The following is a 362-amino-acid chain: 4-hydroxythreonine-4-phosphate dehydrogenase (362 aa).

Thr149 serves as a coordination point for substrate. Positions 184, 229, and 295 each coordinate a divalent metal cation. Residues Lys303, Asn312, and Arg321 each coordinate substrate.

This sequence belongs to the PdxA family. Homodimer. Requires a divalent metal cation as cofactor.

It is found in the cytoplasm. It carries out the reaction 4-(phosphooxy)-L-threonine + NAD(+) = 3-amino-2-oxopropyl phosphate + CO2 + NADH. Its pathway is cofactor biosynthesis; pyridoxine 5'-phosphate biosynthesis; pyridoxine 5'-phosphate from D-erythrose 4-phosphate: step 4/5. Functionally, catalyzes the NAD(P)-dependent oxidation of 4-(phosphooxy)-L-threonine (HTP) into 2-amino-3-oxo-4-(phosphooxy)butyric acid which spontaneously decarboxylates to form 3-amino-2-oxopropyl phosphate (AHAP). The protein is 4-hydroxythreonine-4-phosphate dehydrogenase of Nostoc sp. (strain PCC 7120 / SAG 25.82 / UTEX 2576).